We begin with the raw amino-acid sequence, 248 residues long: MNVVVDTHTHTLASGHAYSTIIENAQSAQNKGLKLLCTTDHAPEMPGAPHYWYFNNQRILPRFLHQVGILRGVEANILNVKGEIDLPFSSDQHLDWVIASFHEPVFAPASEAEHTAALLNVIKSGRIDVLGHSGNPNYPFDIERVLQCAKEYNVAIEVNNTSLTGKSRKGSDVRCDKIVEIGKEIGVYFTTGSDAHFCEEIARLDLAIALLEKYEIAEDKIITTSTSRFLNFLLLRGKLAIPEFERLY.

Zn(2+) is bound by residues His-8, His-10, His-16, His-41, Glu-74, His-102, His-132, Asp-194, and His-196.

Belongs to the PHP family. Zn(2+) is required as a cofactor.

This chain is Probable phosphatase VFMJ11_A0091, found in Aliivibrio fischeri (strain MJ11) (Vibrio fischeri).